Consider the following 440-residue polypeptide: Chromosome partition protein MukF (440 aa).

The segment at 208 to 236 (LSETSGTLRELQDTLEAAGDKLQANLLRI) is leucine-zipper.

This sequence belongs to the MukF family. Interacts, and probably forms a ternary complex, with MukE and MukB via its C-terminal region. The complex formation is stimulated by calcium or magnesium. It is required for an interaction between MukE and MukB.

Its subcellular location is the cytoplasm. It is found in the nucleoid. Involved in chromosome condensation, segregation and cell cycle progression. May participate in facilitating chromosome segregation by condensation DNA from both sides of a centrally located replisome during cell division. Not required for mini-F plasmid partitioning. Probably acts via its interaction with MukB and MukE. Overexpression results in anucleate cells. It has a calcium binding activity. The chain is Chromosome partition protein MukF from Escherichia coli O9:H4 (strain HS).